The chain runs to 1118 residues: Protein SUPPRESSOR OF NPR1-1 CONSTITUTIVE 4 (1118 aa).

Positions 1–35 (MNSQQSTRTKQMLQQSSTHLLCGVVLLQLFAAQVD) are cleaved as a signal peptide. Residues 36-751 (AQRSTSPWQT…PLRNFLKVIR (716 aa)) are Extracellular-facing. In terms of domain architecture, GP-PDE 1 spans 51 to 353 (PLVIARGGFS…DFPLTASASV (303 aa)). Residues Asn-106, Asn-195, Asn-251, Asn-260, Asn-318, Asn-335, Asn-362, Asn-422, Asn-433, Asn-497, Asn-557, Asn-573, and Asn-656 are each glycosylated (N-linked (GlcNAc...) asparagine). The GP-PDE 2 domain maps to 369–670 (FLVISKNGAS…EFPYTAARYK (302 aa)). The helical transmembrane segment at 752 to 772 (IVSWSVAGVVLFLVLLTLVFC) threads the bilayer. Residues 773–1118 (FHRKRETRLR…SEDVSVYTEG (346 aa)) lie on the Cytoplasmic side of the membrane. The Protein kinase domain maps to 805–1094 (KSFAEVVGRG…ALEVPPRPVL (290 aa)). ATP contacts are provided by residues 811 to 819 (VGRGGFGIV) and Lys-833. Asp-928 acts as the Proton acceptor in catalysis.

In the N-terminal section; belongs to the glycerophosphoryl diester phosphodiesterase family. This sequence in the C-terminal section; belongs to the protein kinase superfamily. Ser/Thr protein kinase family. In terms of tissue distribution, expressed in shoots, rosette and cauline leaves, stems, flowers and siliques.

It localises to the cell membrane. The catalysed reaction is a sn-glycero-3-phosphodiester + H2O = an alcohol + sn-glycerol 3-phosphate + H(+). The enzyme catalyses L-seryl-[protein] + ATP = O-phospho-L-seryl-[protein] + ADP + H(+). It catalyses the reaction L-threonyl-[protein] + ATP = O-phospho-L-threonyl-[protein] + ADP + H(+). Functionally, atypical receptor-like kinase involved in disease resistance. This Arabidopsis thaliana (Mouse-ear cress) protein is Protein SUPPRESSOR OF NPR1-1 CONSTITUTIVE 4.